A 318-amino-acid polypeptide reads, in one-letter code: MVSVYLLANFGGPRHASDIEVFLTSLLTDRDVTGKFLPPFIHKRLFSFIAKKRVAKVLPQYNCIGGFSPIYRDTEDLADTLSLYLDAPVITFHRYLPDTHQLTVQRLKAFGDCPVIGVPLFPHFTYSVTGSIVRFIHAHLPLLNISWISHFGNHPQFIFCMIDHILKFLQSHDISIHDCCLLFSAHGLPMRYINKGDPYNKHCEKSFKTISERLPNIETHLCYQSKFGPGRWLTPSTKDVCETLKTDKTYVLIVPFGFTSDHIETLYEIEKEYIPILKAREYRALRVPAIYQSPEWAASLATIIQSTPRAEKESLIKP.

Residues His186 and Glu264 each coordinate Fe cation.

This sequence belongs to the ferrochelatase family.

Its subcellular location is the cytoplasm. The catalysed reaction is heme b + 2 H(+) = protoporphyrin IX + Fe(2+). The protein operates within porphyrin-containing compound metabolism; protoheme biosynthesis; protoheme from protoporphyrin-IX: step 1/1. Its function is as follows. Catalyzes the ferrous insertion into protoporphyrin IX. The chain is Ferrochelatase from Chlamydia felis (strain Fe/C-56) (Chlamydophila felis).